Consider the following 157-residue polypeptide: Ribonuclease H (157 aa).

One can recognise an RNase H type-1 domain in the interval E3–E144. D12, E50, D72, and D136 together coordinate Mg(2+).

This sequence belongs to the RNase H family. Monomer. Mg(2+) is required as a cofactor.

The protein localises to the cytoplasm. It carries out the reaction Endonucleolytic cleavage to 5'-phosphomonoester.. In terms of biological role, endonuclease that specifically degrades the RNA of RNA-DNA hybrids. The sequence is that of Ribonuclease H from Shewanella frigidimarina (strain NCIMB 400).